Reading from the N-terminus, the 172-residue chain is C-phycocyanin beta subunit (172 aa).

Asn-72 is subject to N4-methylasparagine. 2 residues coordinate (2R,3E)-phycocyanobilin: Cys-82 and Cys-153.

Belongs to the phycobiliprotein family. In terms of assembly, heterodimer of an alpha and a beta chain, which further assembles into trimers. The trimers assemble into hexamers, although these were not seen in the crystallographic studies. Part of 2 PBS rod complexes, the conventional CpcG-PBS rod and a photosystem I-specific CpcL-PBS rod, both of which include ferredoxin--NADP reductase (petH). Interacts with rod linker CpcC2 via the latter's N-terminal PBS-linker domain. Post-translationally, contains two covalently linked bilin chromophores.

It localises to the cellular thylakoid membrane. Light-harvesting photosynthetic bile pigment-protein from the phycobiliprotein complex (phycobilisome, PBS). Phycocyanin is the major phycobiliprotein in the PBS rod. The polypeptide is C-phycocyanin beta subunit (cpcB) (Synechocystis sp. (strain ATCC 27184 / PCC 6803 / Kazusa)).